The sequence spans 125 residues: MGSALMFTDTHEWILDNGDGSVTIGISNQAQQLLGDVVFVDMPEVGDNTQAGETFSLVESVKAASDLYAPVTGEIIEINEELEDSPELINESPYSAGWIVKIKLADRNELNNLMSSEDYLAANAE.

Residues 21–103 (SVTIGISNQA…YSAGWIVKIK (83 aa)) enclose the Lipoyl-binding domain. The residue at position 62 (lysine 62) is an N6-lipoyllysine.

It belongs to the GcvH family. In terms of assembly, the glycine cleavage system is composed of four proteins: P, T, L and H. It depends on (R)-lipoate as a cofactor.

In terms of biological role, the glycine cleavage system catalyzes the degradation of glycine. The H protein shuttles the methylamine group of glycine from the P protein to the T protein. This chain is Glycine cleavage system H protein, found in Psychromonas ingrahamii (strain DSM 17664 / CCUG 51855 / 37).